We begin with the raw amino-acid sequence, 194 residues long: Flagellar transcriptional regulator FlhC (194 aa).

Zn(2+) is bound by residues cysteine 139, cysteine 142, cysteine 159, and cysteine 162.

This sequence belongs to the FlhC family. Heterohexamer composed of two FlhC and four FlhD subunits. Each FlhC binds a FlhD dimer, forming a heterotrimer, and a hexamer assembles by dimerization of two heterotrimers. The cofactor is Zn(2+).

The protein resides in the cytoplasm. In terms of biological role, functions in complex with FlhD as a master transcriptional regulator that regulates transcription of several flagellar and non-flagellar operons by binding to their promoter region. Activates expression of class 2 flagellar genes, including fliA, which is a flagellum-specific sigma factor that turns on the class 3 genes. Also regulates genes whose products function in a variety of physiological pathways. The polypeptide is Flagellar transcriptional regulator FlhC (Serratia marcescens).